The sequence spans 339 residues: MLDERKLEVLRAIVEDFVSTNEPVGSKALVERHHLKVSPATVRNDMAALEDEGYIVQPHTSAGRVPTKKGYRLFVDRLSTIKPLSVAERRAIEHFLAGAVDLDDVISRTVRLLAQLTRQVAVVQYPTLDRSAVRHLELIRLSGTRVLLVVITDTGRVEQRQIDLPGELEETDTAELRNRLNAAIAGKRVVDVPDLLATFADGEPPARRSAATAIVSAVLDALVIRRDERVVVGGAANLARFPTDFPESVQPVLEALEEQVVLIRLLGEATRPSEVLVRIGEEDVHEGLRSTAVVSSAYGSKGRALASLGVVGPMRMDYPTTMAAVAAVARYVGRILAEN.

It belongs to the HrcA family.

In terms of biological role, negative regulator of class I heat shock genes (grpE-dnaK-dnaJ and groELS operons). Prevents heat-shock induction of these operons. The chain is Heat-inducible transcription repressor HrcA from Acidothermus cellulolyticus (strain ATCC 43068 / DSM 8971 / 11B).